Reading from the N-terminus, the 325-residue chain is GMP reductase (325 aa).

Cysteine 173 acts as the Thioimidate intermediate in catalysis. Residue isoleucine 202 to valine 225 coordinates NADP(+).

Belongs to the IMPDH/GMPR family. GuaC type 2 subfamily.

The catalysed reaction is IMP + NH4(+) + NADP(+) = GMP + NADPH + 2 H(+). Catalyzes the irreversible NADPH-dependent deamination of GMP to IMP. It functions in the conversion of nucleobase, nucleoside and nucleotide derivatives of G to A nucleotides, and in maintaining the intracellular balance of A and G nucleotides. This is GMP reductase from Variovorax paradoxus (strain S110).